A 462-amino-acid polypeptide reads, in one-letter code: Hydroxymethylglutaryl-CoA synthase (462 aa).

The active-site Proton donor/acceptor is the glutamate 92. The Acyl-thioester intermediate role is filled by cysteine 124. (3S)-3-hydroxy-3-methylglutaryl-CoA contacts are provided by cysteine 124, threonine 167, serine 219, histidine 257, lysine 266, asparagine 327, and serine 360. The active-site Proton donor/acceptor is the histidine 257. Lysine 408 is covalently cross-linked (Glycyl lysine isopeptide (Lys-Gly) (interchain with G-Cter in SUMO)).

Belongs to the thiolase-like superfamily. HMG-CoA synthase family. In terms of processing, ubiquitinated.

It catalyses the reaction acetoacetyl-CoA + acetyl-CoA + H2O = (3S)-3-hydroxy-3-methylglutaryl-CoA + CoA + H(+). Its pathway is metabolic intermediate biosynthesis; (R)-mevalonate biosynthesis; (R)-mevalonate from acetyl-CoA: step 2/3. In terms of biological role, this enzyme condenses acetyl-CoA with acetoacetyl-CoA to form HMG-CoA, which is the substrate for HMG-CoA reductase. The chain is Hydroxymethylglutaryl-CoA synthase from Caenorhabditis elegans.